We begin with the raw amino-acid sequence, 471 residues long: ATP synthase subunit beta (471 aa).

156 to 163 (GGAGVGKT) is an ATP binding site.

Belongs to the ATPase alpha/beta chains family. F-type ATPases have 2 components, CF(1) - the catalytic core - and CF(0) - the membrane proton channel. CF(1) has five subunits: alpha(3), beta(3), gamma(1), delta(1), epsilon(1). CF(0) has three main subunits: a(1), b(2) and c(9-12). The alpha and beta chains form an alternating ring which encloses part of the gamma chain. CF(1) is attached to CF(0) by a central stalk formed by the gamma and epsilon chains, while a peripheral stalk is formed by the delta and b chains.

The protein localises to the cell membrane. The enzyme catalyses ATP + H2O + 4 H(+)(in) = ADP + phosphate + 5 H(+)(out). Functionally, produces ATP from ADP in the presence of a proton gradient across the membrane. The catalytic sites are hosted primarily by the beta subunits. The protein is ATP synthase subunit beta of Lysinibacillus sphaericus (strain C3-41).